Reading from the N-terminus, the 671-residue chain is tRNA 5-methylaminomethyl-2-thiouridine biosynthesis bifunctional protein MnmC (671 aa).

The interval 1–245 (MVNVMNTLSF…KREMLWGEKP (245 aa)) is tRNA (mnm(5)s(2)U34)-methyltransferase. The FAD-dependent cmnm(5)s(2)U34 oxidoreductase stretch occupies residues 272–671 (VGGGVASLFV…RKLLKGSKVE (400 aa)).

In the N-terminal section; belongs to the methyltransferase superfamily. tRNA (mnm(5)s(2)U34)-methyltransferase family. This sequence in the C-terminal section; belongs to the DAO family. It depends on FAD as a cofactor.

The protein resides in the cytoplasm. The catalysed reaction is 5-aminomethyl-2-thiouridine(34) in tRNA + S-adenosyl-L-methionine = 5-methylaminomethyl-2-thiouridine(34) in tRNA + S-adenosyl-L-homocysteine + H(+). Functionally, catalyzes the last two steps in the biosynthesis of 5-methylaminomethyl-2-thiouridine (mnm(5)s(2)U) at the wobble position (U34) in tRNA. Catalyzes the FAD-dependent demodification of cmnm(5)s(2)U34 to nm(5)s(2)U34, followed by the transfer of a methyl group from S-adenosyl-L-methionine to nm(5)s(2)U34, to form mnm(5)s(2)U34. This chain is tRNA 5-methylaminomethyl-2-thiouridine biosynthesis bifunctional protein MnmC, found in Actinobacillus pleuropneumoniae serotype 3 (strain JL03).